Consider the following 166-residue polypeptide: Phosphopantetheine adenylyltransferase (166 aa).

T10 lines the substrate pocket. ATP is bound by residues 10-11 and H18; that span reads TF. Substrate contacts are provided by K42, L75, and R89. ATP contacts are provided by residues 90–92, E100, and 125–131; these read GVR and YTYVAST.

This sequence belongs to the bacterial CoaD family. In terms of assembly, homohexamer. Mg(2+) is required as a cofactor.

Its subcellular location is the cytoplasm. The enzyme catalyses (R)-4'-phosphopantetheine + ATP + H(+) = 3'-dephospho-CoA + diphosphate. Its pathway is cofactor biosynthesis; coenzyme A biosynthesis; CoA from (R)-pantothenate: step 4/5. Reversibly transfers an adenylyl group from ATP to 4'-phosphopantetheine, yielding dephospho-CoA (dPCoA) and pyrophosphate. The chain is Phosphopantetheine adenylyltransferase from Chlorobaculum parvum (strain DSM 263 / NCIMB 8327) (Chlorobium vibrioforme subsp. thiosulfatophilum).